A 156-amino-acid chain; its full sequence is Small ribosomal subunit protein uS7 (156 aa).

This sequence belongs to the universal ribosomal protein uS7 family. As to quaternary structure, part of the 30S ribosomal subunit. Contacts proteins S9 and S11.

Functionally, one of the primary rRNA binding proteins, it binds directly to 16S rRNA where it nucleates assembly of the head domain of the 30S subunit. Is located at the subunit interface close to the decoding center, probably blocks exit of the E-site tRNA. This chain is Small ribosomal subunit protein uS7, found in Staphylococcus saprophyticus subsp. saprophyticus (strain ATCC 15305 / DSM 20229 / NCIMB 8711 / NCTC 7292 / S-41).